The primary structure comprises 157 residues: UPF0262 protein RL0614 (157 aa).

The protein belongs to the UPF0262 family.

The sequence is that of UPF0262 protein RL0614 from Rhizobium johnstonii (strain DSM 114642 / LMG 32736 / 3841) (Rhizobium leguminosarum bv. viciae).